We begin with the raw amino-acid sequence, 85 residues long: Electron transfer flavoprotein regulatory factor 1 homolog (85 aa).

Belongs to the complex I LYR family. In terms of tissue distribution, highly expressed in the larval fat body.

The protein resides in the mitochondrion. Its function is as follows. Acts as a regulator of the electron transfer flavoprotein by promoting the removal of flavin from the ETF holoenzyme. May act with the ETF complex to coordinate lipid homeostasis in the fat body in response to stage-specific demands. This is Electron transfer flavoprotein regulatory factor 1 homolog from Drosophila melanogaster (Fruit fly).